A 287-amino-acid chain; its full sequence is Pantothenate synthetase (287 aa).

M30 to H37 lines the ATP pocket. H37 (proton donor) is an active-site residue. Q61 is a (R)-pantoate binding site. Q61 lines the beta-alanine pocket. G147–D150 is an ATP binding site. Q153 is a binding site for (R)-pantoate. An ATP-binding site is contributed by M184–R187.

This sequence belongs to the pantothenate synthetase family. Homodimer.

It localises to the cytoplasm. It catalyses the reaction (R)-pantoate + beta-alanine + ATP = (R)-pantothenate + AMP + diphosphate + H(+). It functions in the pathway cofactor biosynthesis; (R)-pantothenate biosynthesis; (R)-pantothenate from (R)-pantoate and beta-alanine: step 1/1. Functionally, catalyzes the condensation of pantoate with beta-alanine in an ATP-dependent reaction via a pantoyl-adenylate intermediate. This Granulibacter bethesdensis (strain ATCC BAA-1260 / CGDNIH1) protein is Pantothenate synthetase.